A 501-amino-acid chain; its full sequence is Probable cytochrome P450 508A4 (501 aa).

A helical transmembrane segment spans residues 1 to 21 (MIMLIKVFVLLLVVYILHNSY). Heme is bound at residue Cys445.

Belongs to the cytochrome P450 family. It depends on heme as a cofactor.

It is found in the membrane. This Dictyostelium discoideum (Social amoeba) protein is Probable cytochrome P450 508A4 (cyp508A4).